A 68-amino-acid polypeptide reads, in one-letter code: Large ribosomal subunit protein uL29 (68 aa).

This sequence belongs to the universal ribosomal protein uL29 family.

This is Large ribosomal subunit protein uL29 from Parvibaculum lavamentivorans (strain DS-1 / DSM 13023 / NCIMB 13966).